Reading from the N-terminus, the 452-residue chain is tRNA modification GTPase MnmE (452 aa).

(6S)-5-formyl-5,6,7,8-tetrahydrofolate-binding residues include R24, E81, and R120. Residues 216-373 (GIKTVIVGAP…LFGAIGRWAD (158 aa)) enclose the TrmE-type G domain. Residues 226–231 (NVGKSS), 245–251 (SAEPGTT), and 270–273 (DTAG) contribute to the GTP site. Mg(2+) is bound by residues S230 and T251. K452 is a (6S)-5-formyl-5,6,7,8-tetrahydrofolate binding site.

This sequence belongs to the TRAFAC class TrmE-Era-EngA-EngB-Septin-like GTPase superfamily. TrmE GTPase family. In terms of assembly, homodimer. Heterotetramer of two MnmE and two MnmG subunits. Requires K(+) as cofactor.

The protein resides in the cytoplasm. Functionally, exhibits a very high intrinsic GTPase hydrolysis rate. Involved in the addition of a carboxymethylaminomethyl (cmnm) group at the wobble position (U34) of certain tRNAs, forming tRNA-cmnm(5)s(2)U34. The sequence is that of tRNA modification GTPase MnmE from Opitutus terrae (strain DSM 11246 / JCM 15787 / PB90-1).